The chain runs to 3184 residues: MDAERGSVAPRDIDTLKKEVQLRVNPLVLKFQDAVSGKVYRLPLTVHNLGRWNQKIRFQEPSKPQFKLLLTSLDKELASGLQMTAMVEYHPNKNEDMSDHIFISVGNKVLDIPLFGLIPVCQLEIVPVVDFGTLVANSKVHCKEITIINRGKAPGKFKAEYQGQLPIVISPSSGIVKAKTSMVIKVDFCADQAQIVNEMARVSLQGCPETFLNIKVRVVEQIIELFHMNSERKLECIRFGSVFFGTSKLEHALLYNNSPESINWVAIMQDDCVGEELGTNIHQRTDIAINNISYLNKIKKIDMTDFMSCVPNEGTLLPYQKIVITFCFSPKLVVDTKKDVGPSHRQDYALFVRFDSVGSKDGFLRDDNSNTMKSNRLQKVELALTGSGLPVILQFDPGKSLTFAPCHMGEHSDILCIVKNQSISLPVMYHFKKTAHFKMDPERGKIDEGCIQNVICSFVPHQIGVFKVKQVIEIIGPVADDNLRSLSMKPFLYIHLNFSSTCKAFTRKVGVKINPGISPLISNPTRHFVAKDSEKKDDLPPVAAMLQSTATKLHDHCLKDESTKNALIAFPNDRATSIRSGDHHEHFRTIFTKIPRYDYTDPDYEYTDLEKLERKAHRDYYTNYINNLRTIRLRKEAQRERKFPVNEVDIGMLPLSGLKSPPLSQSEIEEEIPPSLKASSLKANRLLSTKKIASRESECLQRKITRGLKSKPTTHQEKQECSKVLTPKQIHQVIVGPSVLNFGNICVKSTNTHLLHIVNMLPMYILIQLDVDFEELQKTKQFSYVIPPTSSTYISMVFESSTSGKFWKSFTFKINNIPGGHILVMAAILPVKLELSSNEIVLRPQSFLLKTCFRGTVRLYNHLNCPAQFGWKPVTTLRGIAFTICPAQGTVDPYCSLECEVTWQPGFSSPDKGEFLLQVSGGNTLTLKCIAHVGHTKVTFLEPRILFSNCSQGLTTWRKAILHNIGQNHAYFKVCDQSLLSTINIVPSEGIIPFGGITVLNISCTPSVAEKFDTRAKVAIHHANVIDLRIGGSVEIPDVEILPSTFNFSGTYVGTTEIIPFIIKNRGVTRARVEFNLKEFPLFAMDFKGNAGECKNVEGPYMYAIEVEEGTSAECGITFSPVEVATYDFSFPVLINSFKASDLYCEYLSQQKVLMPRVSPLIPPCFVQATVLRAPLELSSTVFLFKIPLYEFQHNKEVTRIQDLVLHNISKKTVLWSLDIGRIDKYFKSGIFKFTALIGSLKPNEKYTISIHFCPKQTITYLADVAIRLNDNLFDYRILHLIGEIQLPKISFDPSFICFTPVPLDVTTGVDIRILPQNYFSNSTLHFKIPTAKLLDNDEIHPLTVTFPNGRVIKGSNTGLNDEILCHLSFSSSKPVSFFANLFFSDDRNNWFSLPVTATSENCILTIYLYLAVHLDTQRVVLKEEKQGNIKKPRGSFLVPRRDSKSFASQKMKRGSLVPKFNDAEVICGNLFVGMEISRDYFDSDESIAEKLYAKYLEKEEKCQQFFAPEEGSKAFDYFQKVVNAAQTWFSLFGWPEGPHSLSIPETIRRDVQKIQFYSTSSPPKKFSRQSDFSKYNKTIYDVILHLSGKLPPGINAGQSLPVDNVERVMQLHLQHASLLDFITAQGGCISHVLPEFLLEPKDYMKWLEITTATKSTALSTLKGNYSVNIDMDNFEAWSKRAWTDVFLQIYKVTILSRVTPHCTSSMPILHGENKSKISPCFASSNIYSDSERILLSWLNTNYESQRTSIWKNNKSDVPPGRWIVNFDSDLLDGLVFATQLAAYCPFLIETYFINMYTKPKRPEQYLHNCLIIINSLREIGFDLNIQAIDICDPNPVLMLMLCVYLYERLPTYLPKKVVPFSCTLYDVVVGQILLKNPSLKNLVYTATIVGRDANNFCLAQTGNVVTIGPKNHIVLVVKFVSRFLHPAEATLLLISRPKCGIGGSTLAFALKGEIRNFKAIDVIKCKAPCYQWKEVTVNVKNPFPSGGDFHVILVESTTLMYLPAQVTDSSKVSVMPDHMRSSDYAADQSSSHAENGLRTSIKSNFIREFFCSSTTLSLRPKTSSSIDVYYLPFDMHVRYCAIILSNKDIGDLIYIIEGRGLIPLPSNFLPLEPPSPIDYSTSLEEDKEDPILYLNCKPHQILDMDLKIPLTNEAKEKALAFAAQQQMSTLEYERRAISGTLESSTIRAAVALLGLTKIECLLLFNMSKLKKPKSILYTTELSLPAHFNIPRKIYIPQIPEPPDFHMQSLQIKPQIVSGERPFQKPLPSIQAALEGTVSIPLRFAPLGSGRYPCKLLLLSRHDVRVYLLEGIVNEEVPEAELLFKTPAFQPLTQNIPIKNESKKLSKFHVKIEGEWFHGPPILHVGPGETIQYPLTFKPILECEIMGKLTLQNEVDGMAHIVEIDGIGTKPIALDHIIIDCKVGKVTDKSIIVPNYTKSLLTFKVTSDLSIVWGNSFITIEPDDSIPYTLHVCPWKRGTFKGAIMFFVKSRDEEESQEETDTEKDFSSQETPSDQSTIIFEEYSEEKVKALKIWYHLEIRSSPGPPVDIIELHCIALETTCIEIPISNSKNQPVCLDVKLTCSALNGPVEMTLAPLESVTYIVWYSPATTGYKEESIIFQPEMGEEFWYLLKLTTELPKPKEIPEMQCDLGKKIIQTLPLYNPTHETLELRIRNSNPINFVIELNRKLPLVLLPHSTTELSVYFHPSGLGRHGHETCINFYCTQFKEWKFYLFGVGLYPRPIELKRVTTILGLQASVMVHFRNPTSEDVSVDLILTNKEQPKGLAIDQCWKTFLHENAAFRFSSLRRTHGIIVPPKGNLDIPVLFIPSTMTLYKTMVIVKMKRTNKKNWLIDNFDELSAETKRYMGVGYGEIQAIHWMYPIIGLPQAPPPKSSPVIIRCQANKQREEKVEVSMLGSFFNTHPKPDMTEFLVFPKRNVYKSIYEDVDVNSKRREFEYEIEFESEDVKSNLDSFVTLYLFRKHFNVKSEIISLIFNVIFTPRKPFRANVTLNVECITEGIWKFPITLIATEPEVEDVINIHGIGLFKTSETEFRLTSQTRYYEPFVAHFLPGSDQEFFVKPQSGELPPFYTKGIVIIVGFKPRMYSKKYQATLVIQTDEIYWLYEINGLAPSSKSLTHVTAKVDATSKIYDCMPPIQRNFIRENAKLRSTAVSSTVKGAPLFKKHK.

One can recognise a Calponin-homology (CH) domain in the interval 1729-1851 (SDSERILLSW…LCVYLYERLP (123 aa)). The segment at 2491–2514 (RDEEESQEETDTEKDFSSQETPSD) is disordered. Over residues 2493–2502 (EEESQEETDT) the composition is skewed to acidic residues.

Interacts with CFAP65. In terms of tissue distribution, highly expressed in spermatzoa (at protein level).

Its subcellular location is the cytoplasm. The protein resides in the cytoskeleton. It is found in the flagellum basal body. Its function is as follows. Plays a role in flagellar formation and sperm motility. This Mus musculus (Mouse) protein is Cilia and flagella-associated protein 47.